Consider the following 327-residue polypeptide: Germination protease (327 aa).

The propeptide occupies Met-1–Asp-7.

The protein belongs to the peptidase A25 family. In terms of assembly, homotetramer. In terms of processing, autoproteolytically processed. The inactive tetrameric zymogen termed p46 autoprocesses to a smaller form termed p41, which is active only during spore germination.

It carries out the reaction Endopeptidase action with P4 Glu or Asp, P1 preferably Glu &gt; Asp, P1' hydrophobic and P2' Ala.. Functionally, initiates the rapid degradation of small, acid-soluble proteins during spore germination. The protein is Germination protease of Clostridium acetobutylicum (strain ATCC 824 / DSM 792 / JCM 1419 / IAM 19013 / LMG 5710 / NBRC 13948 / NRRL B-527 / VKM B-1787 / 2291 / W).